Reading from the N-terminus, the 305-residue chain is MSKSVGVAPHNIVNKSGLHWRDYYEMTKPKVVMLLLLTALVGMCLASETWISWKILLAGLTGIGFLSSAAAVINHVVDRKIDAQMARTSNRPMPKGKVSPQRALVFAGVLTVVGYLILELWVNRLTALLTLASLVGYAFIYTMYLKRATPQNIVIGGLAGAAPPLLGWTAVTNDIHAHALLLVLIIFIWTPPHFWALAIHREKDYARAKIPMLPCTHGIEFTKTSILLYTVLLALISVLPYLIGMTGAIYLLGSSALNAGFLYYAWKLKFASDEHTAMKTFKFSIIHLMVLFVVLLVDHYMRFTF.

8 helical membrane-spanning segments follow: residues 31–51 (VVMLLLLTALVGMCLASETWI), 53–73 (WKILLAGLTGIGFLSSAAAVI), 103–123 (ALVFAGVLTVVGYLILELWVN), 125–145 (LTALLTLASLVGYAFIYTMYL), 152–172 (NIVIGGLAGAAPPLLGWTAVT), 179–199 (ALLLVLIIFIWTPPHFWALAI), 231–251 (VLLALISVLPYLIGMTGAIYL), and 277–297 (AMKTFKFSIIHLMVLFVVLLV).

The protein belongs to the UbiA prenyltransferase family. Protoheme IX farnesyltransferase subfamily.

It is found in the cell inner membrane. The catalysed reaction is heme b + (2E,6E)-farnesyl diphosphate + H2O = Fe(II)-heme o + diphosphate. It functions in the pathway porphyrin-containing compound metabolism; heme O biosynthesis; heme O from protoheme: step 1/1. In terms of biological role, converts heme B (protoheme IX) to heme O by substitution of the vinyl group on carbon 2 of heme B porphyrin ring with a hydroxyethyl farnesyl side group. This Pseudoalteromonas atlantica (strain T6c / ATCC BAA-1087) protein is Protoheme IX farnesyltransferase 2.